Reading from the N-terminus, the 396-residue chain is MLRLRLRSIVIGAAIAGSILLLFNHGSIEGMEDLTEISMLEDYTPEAANKDYVGQQEEEELLYDQPSYIEEEEDPDLEAYLSDLEREELEHSLEELDEENNYKLHLRYSFSQLQDFDEENEAVHMIVPKDTYEFEVPYHADIPKLIWQTSKDPFDREVMKYTRFWRINHPSYSHAVLDDEQSKALVISSFGDSSVSKISQAYAMMPLPVLKADFFRYLVLLAKGGIYSDIDTAPLKHINNWIPREYRKRNIRLIVGIEADPDRPDWNDYYARRVQFCQWTIAAAPGHPILWELVRRITDETWKLHDSKKLSKNGESVMEWTGPGIWTDAIMDYLNWQYGPFSVENITNLEEPYLVGDVLILPITAFSPGVGHMGSKSPNDPMAYVQHFFAGSWKDD.

Topologically, residues 1–7 (MLRLRLR) are cytoplasmic. The helical; Signal-anchor for type II membrane protein transmembrane segment at 8–28 (SIVIGAAIAGSILLLFNHGSI) threads the bilayer. Over 29–396 (EGMEDLTEIS…HFFAGSWKDD (368 aa)) the chain is Lumenal. A DXD motif motif is present at residues 229–231 (DID). Asparagine 345 carries an N-linked (GlcNAc...) asparagine glycan.

This sequence belongs to the glycosyltransferase 32 family. It depends on Mn(2+) as a cofactor.

Its subcellular location is the endoplasmic reticulum membrane. It is found in the golgi apparatus membrane. The catalysed reaction is Transfers an alpha-D-mannosyl residue from GDP-mannose into lipid-linked oligosaccharide, forming an alpha-(1-&gt;6)-D-mannosyl-D-mannose linkage.. Mannosyltransferase involved in outer chain elongation of asparagine-linked oligosaccharides of the type Man(9)GlcNAc(2). May otherwise add the first alpha-1,6-mannose to the Man(8)GlcNAc(2) core oligosaccharide from the ER. Represents the first enzymatic event required for synthesis of outer chain mannose linkages on yeast secretory proteins. The chain is Initiation-specific alpha-1,6-mannosyltransferase from Schizosaccharomyces pombe (strain 972 / ATCC 24843) (Fission yeast).